Here is a 334-residue protein sequence, read N- to C-terminus: tRNA U34 carboxymethyltransferase (334 aa).

Residues lysine 91, tryptophan 105, lysine 110, glycine 130, 152–154 (DPT), 181–182 (IE), methionine 196, tyrosine 200, and arginine 315 contribute to the carboxy-S-adenosyl-L-methionine site.

This sequence belongs to the class I-like SAM-binding methyltransferase superfamily. CmoB family. Homotetramer.

It carries out the reaction carboxy-S-adenosyl-L-methionine + 5-hydroxyuridine(34) in tRNA = 5-carboxymethoxyuridine(34) in tRNA + S-adenosyl-L-homocysteine + H(+). In terms of biological role, catalyzes carboxymethyl transfer from carboxy-S-adenosyl-L-methionine (Cx-SAM) to 5-hydroxyuridine (ho5U) to form 5-carboxymethoxyuridine (cmo5U) at position 34 in tRNAs. The polypeptide is tRNA U34 carboxymethyltransferase (Klebsiella pneumoniae (strain 342)).